Consider the following 166-residue polypeptide: Large ribosomal subunit protein uL10 (166 aa).

Belongs to the universal ribosomal protein uL10 family. As to quaternary structure, part of the ribosomal stalk of the 50S ribosomal subunit. The N-terminus interacts with L11 and the large rRNA to form the base of the stalk. The C-terminus forms an elongated spine to which L12 dimers bind in a sequential fashion forming a multimeric L10(L12)X complex.

Forms part of the ribosomal stalk, playing a central role in the interaction of the ribosome with GTP-bound translation factors. The sequence is that of Large ribosomal subunit protein uL10 from Streptococcus sanguinis (strain SK36).